Consider the following 330-residue polypeptide: MKVVKAAAVQISPVLYSREATVEKVVKKIHELGQLGVQFATFPETVVPYYPYFSAVQTGIELLSGTEHLRLLDQAVTVPSPATDAIGEAARKAGMVVSIGVNERDGGTLYNTQLLFDADGTLIQRRRKITPTHFERMIWGQGDGSGLRAVDSKVGRIGQLACFEHNNPLARYALIADGEQIHSAMYPGSAFGEGFAQRMEINIRQHALESGAFVVNATAWLDADQQAQIIKDTGCGIGPISGGCFTTIVAPDGMLMAEPLRSGEGEVIVDLDFTLIDRRKMLMDSAGHYNRPELLSLMIDRTATAHVHERAAHPVSGAEQGPEDLRTPAA.

The region spanning 4-273 (VKAAAVQISP…EGEVIVDLDF (270 aa)) is the CN hydrolase domain. The active-site Proton acceptor is E44. The active-site Proton donor is K128. The active-site Nucleophile is the C162. A disordered region spans residues 310 to 330 (RAAHPVSGAEQGPEDLRTPAA).

The protein belongs to the carbon-nitrogen hydrolase superfamily. Nitrilase family.

The catalysed reaction is a nitrile + 2 H2O = a carboxylate + NH4(+). In terms of biological role, nitrilases catalyze the mild hydrolytic conversion of organonitriles directly to the corresponding carboxylic acids. The polypeptide is Nitrilase 3 (Unknown prokaryotic organism).